Consider the following 2472-residue polypeptide: MDPSGVKVLETAEDIQERRQQVLDRYHRFKELSTLRRQKLEDSYRFQFFQRDAEELEKWIQEKLQVASDENYKDPTNLQGKLQKHQAFEAEVQANSGAIVKLDETGNLMISEGHFASETIRTRLMELHRQWELLLEKMREKGIKLLQAQKLVQYLRECEDVMDWINDKEAIVTSEELGQDLEHVEVLQKKFEEFQTDLAAHEERVNEVSQFAAKLIQEQHPEEELIKTKQDEVNAAWQRLKGLALQRQGKLFGAAEVQRFNRDVDETIGWIKEKEQLMASDDFGRDLASVQALLRKHEGLERDLAALEDKVKALCAEADRLQQSHPLSASQIQVKREELITNWEQIRTLAAERHARLDDSYRLQRFLADFRDLTSWVTEMKALINADELANDVAGAEALLDRHQEHKGEIDAHEDSFKSADESGQALLAASHYASDEVREKLSILSEERTALLELWELRRQQYEQCMDLQLFYRDTEQVDNWMSKQEAFLLNEDLGDSLDSVEALLKKHEDFEKSLSAQEEKITALDEFATKLIQNNHYAMEDVATRRDALLSRRNALHERAMHRRAQLADSFHLQQFFRDSDELKSWVNEKMKTATDEAYKDPSNLQGKVQKHQAFEAELSANQSRIDALEKAGQKLIDVNHYAKEEVAARMNEVISLWKKLLEATELKGIKLREANQQQQFNRNVEDIELWLYEVEGHLASDDYGKDLTNVQNLQKKHALLEADVAAHQDRIDGITIQARQFQDAGHFDAENIKKKQEALVARYEALKEPMVARKQKLADSLRLQQLFRDVEDEETWIREKEPIAASTNRGKDLIGVQNLLKKHQALQAEIAGHEPRIKAVTQKGNAMVEEGHFAAEDVKAKLSELNQKWEALKAKASQRRQDLEDSLQAQQYFADANEAESWMREKEPIVGSTDYGKDEDSAEALLKKHEALMSDLSAYGSSIQALREQAQSCRQQVAPMDDETGKELVLALYDYQEKSPREVTMKKGDILTLLNSTNKDWWKVEVNDRQGFVPAAYVKKLDPAQSASRENLLEEQGSIALRQGQIDNQTRITKEAGSVSLRMKQVEELYQSLLELGEKRKGMLEKSCKKFMLFREANELQQWITEKEAALTNEEVGADLEQVEVLQKKFDDFQKDLKANESRLKDINKVAEDLESEGLMAEEVQAVQQQEVYGAMPRDEADSKTASPWKSARLMVHTVATFNSIKELNERWRSLQQLAEERSQLLGSAHEVQRFHRDADETKEWIEEKNQALNTDNYGHDLASVQALQRKHEGFERDLAALGDKVNSLGETAQRLIQSHPESAEDLKEKCTELNQAWTSLGKRADQRKAKLGDSHDLQRFLSDFRDLMSWINGIRGLVSSDELAKDVTGAEALLERHQEHRTEIDARAGTFQAFEQFGQQLLAHGHYASPEIKEKLDILDQERTDLEKAWVQRRMMLDHCLELQLFHRDCEQAENWMAAREAFLNTEDKGDSLDSVEALIKKHEDFDKAINVQEEKIAALQAFADQLIAVDHYAKGDIANRRNEVLDRWRRLKAQMIEKRSKLGESQTLQQFSRDVDEIEAWISEKLQTASDESYKDPTNIQSKHQKHQAFEAELHANADRIRGVIDMGNSLIERGACAGSEDAVKARLAALADQWQFLVQKSAEKSQKLKEANKQQNFNTGIKDFDFWLSEVEALLASEDYGKDLASVNNLLKKHQLLEADISAHEDRLKDLNSQADSLMTSSAFDTSQVKEKRDTINGRFQKIKSMATSRRAKLSESHRLHQFFRDMDDEESWIKEKKLLVSSEDYGRDLTGVQNLRKKHKRLEAELAAHEPAIQGVLDTGKKLSDDNTIGQEEIQQRLAQFVEHWKELKQLAAARGQRLEESLEYQQFVANVEEEEAWINEKMTLVASEDYGDTLAAIQGLLKKHEAFETDFTVHKDRVNDVCTNGQDLIKKNNHHEENISSKMKGLNGKVSDLEKAAAQRKAKLDENSAFLQFNWKADVVESWIGEKENSLKTDDYGRDLSSVQTLLTKQETFDAGLQAFQQEGIANITALKDQLLAAKHIQSKAIEARHASLMKRWTQLLANSATRKKKLLEAQSHFRKVEDLFLTFAKKASAFNSWFENAEEDLTDPVRCNSLEEIKALREAHDAFRSSLSSAQADFNQLAELDRQIKSFRVASNPYTWFTMEALEETWRNLQKIIKERELELQKEQRRQEENDKLRQEFAQHANAFHQWIQETRTYLLDGSCMVEESGTLESQLEATKRKHQEIRAMRSQLKKIEDLGAAMEEALILDNKYTEHSTVGLAQQWDQLDQLGMRMQHNLEQQIQARNTTGVTEEALKEFSMMFKHFDKDKSGRLNHQEFKSCLRSLGYDLPMVEEGEPDPEFEAILDTVDPNRDGHVSLQEYMAFMISRETENVKSSEEIESAFRALSSEGKPYVTKEELYQNLTREQADYCVSHMKPYVDGKGRELPTAFDYVEFTRSLFVN.

At methionine 1 the chain carries N-acetylmethionine. Spectrin repeat units lie at residues 45 to 146 (RFQF…IKLL), 150 to 251 (KLVQ…QGKL), 256 to 358 (EVQR…ARLD), 361 to 465 (YRLQ…QYEQ), 468 to 570 (DLQL…AQLA), 574 to 676 (HLQQ…KLRE), 679 to 781 (QQQQ…QKLA), 785 to 888 (RLQQ…DLED), and 891 to 961 (QAQQ…QQVA). Serine 587 is subject to Phosphoserine. Lysine 637 is subject to N6-acetyllysine. Lysine 803 carries the N6-acetyllysine modification. A phosphoserine mark is found at serine 924, serine 982, serine 999, serine 1029, serine 1031, and serine 1041. Positions 967–1026 (TGKELVLALYDYQEKSPREVTMKKGDILTLLNSTNKDWWKVEVNDRQGFVPAAYVKKLDP) constitute an SH3 domain. Residues 1096 to 1166 (LFREANELQQ…LESEGLMAEE (71 aa)) form a Spectrin 10 repeat. Phosphotyrosine is present on tyrosine 1176. A phosphoserine mark is found at serine 1190, serine 1207, serine 1217, serine 1291, serine 1306, serine 1323, and serine 1338. The Spectrin 11 repeat unit spans residues 1233-1336 (HEVQRFHRDA…RADQRKAKLG (104 aa)). Spectrin repeat units lie at residues 1339 to 1441 (HDLQ…RMML) and 1446 to 1549 (ELQL…KLGE). The residue at position 1519 (lysine 1519) is an N6-acetyllysine. Residues serine 1550, serine 1557, serine 1578, serine 1615, and serine 1647 each carry the phosphoserine modification. 7 Spectrin repeats span residues 1552–1656 (TLQQ…KLKE), 1659–1762 (KQQN…KLSE), 1764–1868 (HRLH…RLEE), 1871–1974 (EYQQ…KLDE), 1978–2081 (FLQF…KLLE), 2092–2194 (LFLT…LELQ), and 2206–2310 (LRQE…NLEQ). The residue at position 2020 (threonine 2020) is a Phosphothreonine. Lysine 2052 is subject to N6-acetyllysine. At threonine 2066 the chain carries Phosphothreonine. 3 consecutive EF-hand domains span residues 2323 to 2358 (EALKEFSMMFKHFDKDKSGRLNHQEFKSCLRSLGYD), 2366 to 2401 (EPDPEFEAILDTVDPNRDGHVSLQEYMAFMISRETE), and 2404 to 2439 (KSSEEIESAFRALSSEGKPYVTKEELYQNLTREQAD). Positions 2336, 2338, 2340, 2342, 2347, 2379, 2381, 2383, 2385, and 2390 each coordinate Ca(2+). N6-acetyllysine is present on lysine 2421.

It belongs to the spectrin family. As to quaternary structure, like erythrocyte spectrin, the spectrin-like proteins are capable of forming dimers which can further associate to tetramers. Interacts (via C-terminal spectrin repeats) with TRPC4. Interacts with CALM and EMD. Interacts with isoform 1 of ACP1. Identified in a complex with ACTN4, CASK, IQGAP1, MAGI2, NPHS1 and SPTBN1. Interacts with SHANK3 (via ANK repeats). Interacts with CLN3; this interaction regulates the fodrin localization at the plasma membrane. Phosphorylation of Tyr-1176 decreases sensitivity to cleavage by calpain in vitro.

The protein resides in the cytoplasm. Its subcellular location is the cytoskeleton. It is found in the cell cortex. Fodrin, which seems to be involved in secretion, interacts with calmodulin in a calcium-dependent manner and is thus candidate for the calcium-dependent movement of the cytoskeleton at the membrane. The polypeptide is Spectrin alpha chain, non-erythrocytic 1 (Sptan1) (Mus musculus (Mouse)).